Here is a 376-residue protein sequence, read N- to C-terminus: Queuine tRNA-ribosyltransferase (376 aa).

The Proton acceptor role is filled by aspartate 93. Substrate contacts are provided by residues 93–97 (DSGGF), aspartate 147, glutamine 190, and glycine 217. The RNA binding stretch occupies residues 248 to 254 (GVGKPGD). Aspartate 267 (nucleophile) is an active-site residue. 4 residues coordinate Zn(2+): cysteine 305, cysteine 307, cysteine 310, and histidine 336.

This sequence belongs to the queuine tRNA-ribosyltransferase family. As to quaternary structure, homodimer. Within each dimer, one monomer is responsible for RNA recognition and catalysis, while the other monomer binds to the replacement base PreQ1. Zn(2+) serves as cofactor.

The catalysed reaction is 7-aminomethyl-7-carbaguanine + guanosine(34) in tRNA = 7-aminomethyl-7-carbaguanosine(34) in tRNA + guanine. The protein operates within tRNA modification; tRNA-queuosine biosynthesis. Functionally, catalyzes the base-exchange of a guanine (G) residue with the queuine precursor 7-aminomethyl-7-deazaguanine (PreQ1) at position 34 (anticodon wobble position) in tRNAs with GU(N) anticodons (tRNA-Asp, -Asn, -His and -Tyr). Catalysis occurs through a double-displacement mechanism. The nucleophile active site attacks the C1' of nucleotide 34 to detach the guanine base from the RNA, forming a covalent enzyme-RNA intermediate. The proton acceptor active site deprotonates the incoming PreQ1, allowing a nucleophilic attack on the C1' of the ribose to form the product. After dissociation, two additional enzymatic reactions on the tRNA convert PreQ1 to queuine (Q), resulting in the hypermodified nucleoside queuosine (7-(((4,5-cis-dihydroxy-2-cyclopenten-1-yl)amino)methyl)-7-deazaguanosine). This chain is Queuine tRNA-ribosyltransferase, found in Dinoroseobacter shibae (strain DSM 16493 / NCIMB 14021 / DFL 12).